The chain runs to 440 residues: Thymidine phosphorylase (440 aa).

This sequence belongs to the thymidine/pyrimidine-nucleoside phosphorylase family. In terms of assembly, homodimer.

The enzyme catalyses thymidine + phosphate = 2-deoxy-alpha-D-ribose 1-phosphate + thymine. It participates in pyrimidine metabolism; dTMP biosynthesis via salvage pathway; dTMP from thymine: step 1/2. Its function is as follows. The enzymes which catalyze the reversible phosphorolysis of pyrimidine nucleosides are involved in the degradation of these compounds and in their utilization as carbon and energy sources, or in the rescue of pyrimidine bases for nucleotide synthesis. The protein is Thymidine phosphorylase of Escherichia coli (strain 55989 / EAEC).